The chain runs to 152 residues: Xanthine-guanine phosphoribosyltransferase (152 aa).

5-phospho-alpha-D-ribose 1-diphosphate is bound by residues 37-38, Arg-69, and 88-96; these read RG and DDLVDTGGT. Position 69 (Arg-69) interacts with GMP. Residue Asp-89 coordinates Mg(2+). 2 residues coordinate guanine: Asp-92 and Ile-135. Residues Asp-92 and Ile-135 each contribute to the xanthine site. Residues 92–96 and 134–135 contribute to the GMP site; these read DTGGT and WI.

Belongs to the purine/pyrimidine phosphoribosyltransferase family. XGPT subfamily. Homotetramer. Mg(2+) is required as a cofactor.

It is found in the cell inner membrane. The catalysed reaction is GMP + diphosphate = guanine + 5-phospho-alpha-D-ribose 1-diphosphate. It carries out the reaction XMP + diphosphate = xanthine + 5-phospho-alpha-D-ribose 1-diphosphate. The enzyme catalyses IMP + diphosphate = hypoxanthine + 5-phospho-alpha-D-ribose 1-diphosphate. The protein operates within purine metabolism; GMP biosynthesis via salvage pathway; GMP from guanine: step 1/1. Its pathway is purine metabolism; XMP biosynthesis via salvage pathway; XMP from xanthine: step 1/1. Its function is as follows. Purine salvage pathway enzyme that catalyzes the transfer of the ribosyl-5-phosphate group from 5-phospho-alpha-D-ribose 1-diphosphate (PRPP) to the N9 position of the 6-oxopurines guanine and xanthine to form the corresponding ribonucleotides GMP (guanosine 5'-monophosphate) and XMP (xanthosine 5'-monophosphate), with the release of PPi. To a lesser extent, also acts on hypoxanthine. The protein is Xanthine-guanine phosphoribosyltransferase of Edwardsiella ictaluri (strain 93-146).